Consider the following 92-residue polypeptide: MTRSIKKGPFVDAHLQKKVDEQNAKGTHNVIKTWSRRSMITPDFIGHTFAVHDGRKHVPVFVTESMVGHKLGEFAPTRTFKGHVKDDKKSRR.

Belongs to the universal ribosomal protein uS19 family.

Its function is as follows. Protein S19 forms a complex with S13 that binds strongly to the 16S ribosomal RNA. The chain is Small ribosomal subunit protein uS19 from Bifidobacterium animalis subsp. lactis (strain AD011).